A 950-amino-acid polypeptide reads, in one-letter code: A disintegrin and metalloproteinase with thrombospondin motifs 15 (950 aa).

The signal sequence occupies residues 1–18 (MLLLGISILALAWRPAGS). Positions 19–212 (SEPEWEVVVP…NRRRSGRAKR (194 aa)) are excised as a propeptide. N-linked (GlcNAc...) asparagine glycosylation occurs at Asn-141. Residues 144–172 (APEAQRHSQGAHLLQRRGAPVGPSGDPTS) are disordered. The Cysteine switch signature appears at 172-179 (SRCGVASG). Cys-174 provides a ligand contact to Zn(2+). The 210-residue stretch at 218-427 (RYVETLVVAD…GHGDCLLDQP (210 aa)) folds into the Peptidase M12B domain. 11 disulfide bridges follow: Cys-293/Cys-345, Cys-322/Cys-327, Cys-339/Cys-422, Cys-377/Cys-406, Cys-448/Cys-470, Cys-459/Cys-480, Cys-465/Cys-499, Cys-493/Cys-504, Cys-528/Cys-565, Cys-532/Cys-570, and Cys-543/Cys-555. His-361 is a Zn(2+) binding site. The active site involves Glu-362. The Zn(2+) site is built by His-365 and His-371. Positions 428–515 (SKPITLPEDL…ERHNPNKYRV (88 aa)) constitute a Disintegrin domain. The TSP type-1 1 domain occupies 516 to 571 (DGSWAKWEPYGSCSRTCGGGVQLARRQCSNPTPANGGKYCEGVRVKYRSCNLEPCP). 3 N-linked (GlcNAc...) asparagine glycosylation sites follow: Asn-591, Asn-623, and Asn-679. Residues 701–838 (AIPAGASSID…SNQVEQPDNR (138 aa)) form a spacer region. The tract at residues 798 to 822 (FYLPKEPREDKSTRPKDPRGSPVLR) is disordered. Positions 802-816 (KEPREDKSTRPKDPR) are enriched in basic and acidic residues. TSP type-1 domains are found at residues 839–895 (PPAR…EPCP) and 896–949 (TWEL…VLRP).

Zn(2+) is required as a cofactor. The precursor is cleaved by a furin endopeptidase. Post-translationally, glycosylated. Can be O-fucosylated by POFUT2 on a serine or a threonine residue found within the consensus sequence C1-X(2)-(S/T)-C2-G of the TSP type-1 repeat domains where C1 and C2 are the first and second cysteine residue of the repeat, respectively. Fucosylated repeats can then be further glycosylated by the addition of a beta-1,3-glucose residue by the glucosyltransferase, B3GALTL. Fucosylation mediates the efficient secretion of ADAMTS family members. Can be C-glycosylated with one or two mannose molecules on tryptophan residues within the consensus sequence W-X-X-W of the TPRs. Also N-glycosylated. These other glycosylations can also facilitate secretion. As to expression, in the adult colon, highly expressed in the muscularis externa (inner circular smooth muscle and outer longitudinal smooth muscle), muscularis mucosa, submucosal glands, crypt, villi epithelial cells, goblet cells and lamina propria. Expressed at perimuscular and peritendious areas in the developing limbs.

It is found in the secreted. The protein localises to the extracellular space. Its subcellular location is the extracellular matrix. It localises to the cell surface. Its function is as follows. Metalloprotease which has proteolytic activity against the proteoglycan VCAN, cleaving it at the 'Glu-1401-|-1402-Ala' site. Cleaves VCAN in the pericellular matrix surrounding myoblasts, facilitating myoblast contact and fusion which is required for skeletal muscle development and regeneration. The chain is A disintegrin and metalloproteinase with thrombospondin motifs 15 (Adamts15) from Mus musculus (Mouse).